The chain runs to 164 residues: Phosphopantetheine adenylyltransferase (164 aa).

A substrate-binding site is contributed by Thr14. ATP-binding positions include 14-15 (TF) and His22. The substrate site is built by Lys46, Leu78, and Arg92. ATP contacts are provided by residues 93 to 95 (GLR), Glu103, and 128 to 134 (HAFISST).

It belongs to the bacterial CoaD family. As to quaternary structure, homohexamer. Requires Mg(2+) as cofactor.

Its subcellular location is the cytoplasm. The enzyme catalyses (R)-4'-phosphopantetheine + ATP + H(+) = 3'-dephospho-CoA + diphosphate. It functions in the pathway cofactor biosynthesis; coenzyme A biosynthesis; CoA from (R)-pantothenate: step 4/5. Reversibly transfers an adenylyl group from ATP to 4'-phosphopantetheine, yielding dephospho-CoA (dPCoA) and pyrophosphate. This is Phosphopantetheine adenylyltransferase from Vibrio cholerae serotype O1 (strain ATCC 39541 / Classical Ogawa 395 / O395).